The chain runs to 280 residues: F420-dependent methylenetetrahydromethanopterin dehydrogenase (280 aa).

This sequence belongs to the MTD family.

It catalyses the reaction 5,10-methylenetetrahydromethanopterin + oxidized coenzyme F420-(gamma-L-Glu)(n) + 2 H(+) = 5,10-methenyl-5,6,7,8-tetrahydromethanopterin + reduced coenzyme F420-(gamma-L-Glu)(n). It functions in the pathway one-carbon metabolism; methanogenesis from CO(2); 5,10-methylene-5,6,7,8-tetrahydromethanopterin from 5,10-methenyl-5,6,7,8-tetrahydromethanopterin (coenzyme F420 route): step 1/1. Functionally, catalyzes the reversible reduction of methenyl-H(4)MPT(+) to methylene-H(4)MPT. In Methanospirillum hungatei JF-1 (strain ATCC 27890 / DSM 864 / NBRC 100397 / JF-1), this protein is F420-dependent methylenetetrahydromethanopterin dehydrogenase.